A 315-amino-acid polypeptide reads, in one-letter code: MLVKKISPRGYCYGVVDAMKLAQQAALNDNLPRPIHILGMIVHNAHVTREFERMGVLTVDGPDRLEALETIKEGTVIFTAHGISPAVYARAAEKKLTVVDATCPDVTRTHDLIRSVVADDYEVIYVGKHGHPEPEGAVGVAPEHVHLIEKVEDIEALPAHLADKKIIVTNQTTMSQWDVQALMEHVRKKYPHVEVHNEICNATQVRQEAVAEQAGDCDLVIVVGDPRSNNSNRLAQVSFDIAATPAHRIGDLTELDLSWLDGVNQVGVTSGASTPTPITKKVIDFLQQYDPADISTHDKTPFLELRRILPKVKIL.

Cys12 is a [4Fe-4S] cluster binding site. The (2E)-4-hydroxy-3-methylbut-2-enyl diphosphate site is built by His43 and His81. Residues His43 and His81 each coordinate dimethylallyl diphosphate. The isopentenyl diphosphate site is built by His43 and His81. Cys103 contributes to the [4Fe-4S] cluster binding site. His131 serves as a coordination point for (2E)-4-hydroxy-3-methylbut-2-enyl diphosphate. A dimethylallyl diphosphate-binding site is contributed by His131. Residue His131 participates in isopentenyl diphosphate binding. Glu133 (proton donor) is an active-site residue. Residue Thr172 coordinates (2E)-4-hydroxy-3-methylbut-2-enyl diphosphate. Cys200 is a [4Fe-4S] cluster binding site. Residues Ser228, Asn230, and Ser273 each coordinate (2E)-4-hydroxy-3-methylbut-2-enyl diphosphate. Residues Ser228, Asn230, and Ser273 each coordinate dimethylallyl diphosphate. The isopentenyl diphosphate site is built by Ser228, Asn230, and Ser273.

It belongs to the IspH family. It depends on [4Fe-4S] cluster as a cofactor.

The catalysed reaction is isopentenyl diphosphate + 2 oxidized [2Fe-2S]-[ferredoxin] + H2O = (2E)-4-hydroxy-3-methylbut-2-enyl diphosphate + 2 reduced [2Fe-2S]-[ferredoxin] + 2 H(+). It carries out the reaction dimethylallyl diphosphate + 2 oxidized [2Fe-2S]-[ferredoxin] + H2O = (2E)-4-hydroxy-3-methylbut-2-enyl diphosphate + 2 reduced [2Fe-2S]-[ferredoxin] + 2 H(+). Its pathway is isoprenoid biosynthesis; dimethylallyl diphosphate biosynthesis; dimethylallyl diphosphate from (2E)-4-hydroxy-3-methylbutenyl diphosphate: step 1/1. It participates in isoprenoid biosynthesis; isopentenyl diphosphate biosynthesis via DXP pathway; isopentenyl diphosphate from 1-deoxy-D-xylulose 5-phosphate: step 6/6. Functionally, catalyzes the conversion of 1-hydroxy-2-methyl-2-(E)-butenyl 4-diphosphate (HMBPP) into a mixture of isopentenyl diphosphate (IPP) and dimethylallyl diphosphate (DMAPP). Acts in the terminal step of the DOXP/MEP pathway for isoprenoid precursor biosynthesis. The sequence is that of 4-hydroxy-3-methylbut-2-enyl diphosphate reductase from Exiguobacterium sibiricum (strain DSM 17290 / CCUG 55495 / CIP 109462 / JCM 13490 / 255-15).